A 1047-amino-acid chain; its full sequence is Error-prone DNA polymerase (1047 aa).

This sequence belongs to the DNA polymerase type-C family. DnaE2 subfamily.

The protein resides in the cytoplasm. The enzyme catalyses DNA(n) + a 2'-deoxyribonucleoside 5'-triphosphate = DNA(n+1) + diphosphate. In terms of biological role, DNA polymerase involved in damage-induced mutagenesis and translesion synthesis (TLS). It is not the major replicative DNA polymerase. This chain is Error-prone DNA polymerase, found in Methylococcus capsulatus (strain ATCC 33009 / NCIMB 11132 / Bath).